Reading from the N-terminus, the 329-residue chain is Arylacetonitrilase (329 aa).

The region spanning 6–279 (VRVAVTQAEP…EGIVYANLDM (274 aa)) is the CN hydrolase domain. Glu-46 acts as the Proton acceptor in catalysis. Lys-126 is an active-site residue. Cys-161 functions as the Nucleophile in the catalytic mechanism.

It belongs to the carbon-nitrogen hydrolase superfamily. Nitrilase family.

It catalyses the reaction a nitrile + 2 H2O = a carboxylate + NH4(+). The enzyme catalyses 4-chlorophenylacetonitrile + 2 H2O = 4-chlorophenylacetate + NH4(+). Nitrilase that hydrolyzes preferentially phenylacetonitrile and heteroaromatic nitriles, but has significantly lower activity for (R,S)-mandelonitrile. Also acts on dinitriles like phenylenediacetonitriles (PDAs) 1,2-PDA, 1,3-PDA, and 1,4-PDA, and cyanophenyl acetonitriles (CPAs) 2-CPA and 4-CPA. The polypeptide is Arylacetonitrilase (Hypocrea virens (strain Gv29-8 / FGSC 10586) (Gliocladium virens)).